Here is a 537-residue protein sequence, read N- to C-terminus: Tyrosine-protein kinase Yes (537 aa).

Residues 1-22 show a composition bias toward basic and acidic residues; the sequence is MGCIKSKEDKGPSIKYRTEPKP. The interval 1–60 is disordered; the sequence is MGCIKSKEDKGPSIKYRTEPKPDPGSQYGADPTQATQSPGIKGPAPNFNSHSMTPFGGSS. Residue G2 is the site of N-myristoyl glycine attachment. Residue C3 is the site of S-palmitoyl cysteine; in membrane form attachment. One can recognise an SH3 domain in the interval 85-146; that stretch reads GGVTVFVALY…PSNYVAPADS (62 aa). The SH2 domain occupies 152–249; the sequence is WYFGKMGRKD…GLCYRLTTVC (98 aa). In terms of domain architecture, Protein kinase spans 271 to 524; that stretch reads LRLDVKLGQG…YIQSFLEDYF (254 aa). Residues 277–285 and K299 contribute to the ATP site; that span reads LGQGCFGEV. D390 (proton acceptor) is an active-site residue. Y420 is subject to Phosphotyrosine; by autocatalysis. At Y531 the chain carries Phosphotyrosine; by CSK.

Belongs to the protein kinase superfamily. Tyr protein kinase family. SRC subfamily. Autophosphorylated at Tyr-420 inducing activation. Post-translationally, palmitoylation at Cys-3 promotes membrane localization.

The protein resides in the cell membrane. It is found in the cytoplasm. The protein localises to the cytoskeleton. Its subcellular location is the microtubule organizing center. It localises to the centrosome. The protein resides in the cytosol. It is found in the cell junction. The catalysed reaction is L-tyrosyl-[protein] + ATP = O-phospho-L-tyrosyl-[protein] + ADP + H(+). Functionally, non-receptor protein tyrosine kinase that is involved in the regulation of cell growth and survival, apoptosis, cell-cell adhesion, cytoskeleton remodeling, differentiation, G2/M progression and cytokinesis. The sequence is that of Tyrosine-protein kinase Yes (yes1) from Xenopus laevis (African clawed frog).